The sequence spans 203 residues: ATP-dependent Clp protease proteolytic subunit 1 (203 aa).

S102 (nucleophile) is an active-site residue. H127 is an active-site residue.

The protein belongs to the peptidase S14 family. In terms of assembly, fourteen ClpP subunits assemble into 2 heptameric rings which stack back to back to give a disk-like structure with a central cavity, resembling the structure of eukaryotic proteasomes.

It is found in the cytoplasm. It catalyses the reaction Hydrolysis of proteins to small peptides in the presence of ATP and magnesium. alpha-casein is the usual test substrate. In the absence of ATP, only oligopeptides shorter than five residues are hydrolyzed (such as succinyl-Leu-Tyr-|-NHMec, and Leu-Tyr-Leu-|-Tyr-Trp, in which cleavage of the -Tyr-|-Leu- and -Tyr-|-Trp bonds also occurs).. Its function is as follows. Cleaves peptides in various proteins in a process that requires ATP hydrolysis. Has a chymotrypsin-like activity. Plays a major role in the degradation of misfolded proteins. This chain is ATP-dependent Clp protease proteolytic subunit 1, found in Rhizobium johnstonii (strain DSM 114642 / LMG 32736 / 3841) (Rhizobium leguminosarum bv. viciae).